The primary structure comprises 330 residues: Mas-related G-protein coupled receptor member B8 (330 aa).

The Extracellular portion of the chain corresponds to 1–33 (MDSSFPDWNIEFREQNESYFMESSSCDMSLAMS). A glycan (N-linked (GlcNAc...) asparagine) is linked at Asn16. The chain crosses the membrane as a helical span at residues 34–54 (LLSIIIAIIGLTGNVIVLQLL). Topologically, residues 55 to 62 (GFHMHRNA) are cytoplasmic. A helical membrane pass occupies residues 63-83 (FSVYIFNLSGANFLFLCTHIV). The Extracellular segment spans residues 84–101 (FSLENLIRQFHYIDIHMA). The chain crosses the membrane as a helical span at residues 102–122 (LFSVNVTILAYLAGVSMITAI). Topologically, residues 123 to 146 (SVEYWLSVLWPTWYHAQRPKHTST) are cytoplasmic. Residues 147–167 (VICTLLWVFSLLLTLWNWIIC) traverse the membrane as a helical segment. Topologically, residues 168–177 (KVLDYIYNWD) are extracellular. A helical membrane pass occupies residues 178-198 (MCWKLALIIVVWLLVLFVVLS). Residues 199 to 219 (RSNQALLFRVFCGSQQTPVTR) are Cytoplasmic-facing. A helical transmembrane segment spans residues 220 to 240 (LLVTIMLTALVVLICGFGIGI). Over 241–260 (CFFYWKKEENSIMPCGYFYE) the chain is Extracellular. A helical transmembrane segment spans residues 261-281 (TILLLSGVNSCANPIICLFVG). Residues 282 to 330 (SIKHCQFQCGTLRLILQRAIQESPEEEDEEVEEVVEQEGGEEDEESTTL) lie on the Cytoplasmic side of the membrane. A disordered region spans residues 302-330 (QESPEEEDEEVEEVVEQEGGEEDEESTTL). Residues 304–330 (SPEEEDEEVEEVVEQEGGEEDEESTTL) are compositionally biased toward acidic residues.

The protein belongs to the G-protein coupled receptor 1 family. Mas subfamily.

Its subcellular location is the membrane. In terms of biological role, orphan receptor. Probably involved in the function of nociceptive neurons. May regulate nociceptor function and/or development, including the sensation or modulation of pain. The sequence is that of Mas-related G-protein coupled receptor member B8 (Mrgprb8) from Mus musculus (Mouse).